A 1072-amino-acid polypeptide reads, in one-letter code: PWWP domain-containing protein 1 (1072 aa).

The interval 21–133 is disordered; sequence DSIQDPKVTP…ADEKELDLGL (113 aa). The span at 25 to 38 shows a compositional bias: low complexity; that stretch reads DPKVTPDDTVVDSS. The segment covering 66–77 has biased composition (basic and acidic residues); the sequence is RVLESERSEKDG. The segment covering 96–128 has biased composition (acidic residues); the sequence is KDDESSEVKEEEEEEDGSDDQSSELGSEADEKE. Residues 173-234 form the PWWP domain; it reads VGDLVWGKVK…PAELIPFEPN (62 aa). The tract at residues 365–387 is disordered; it reads KSPRSSVSTLEPHNRAPPRAPLS. A compositionally biased stretch (polar residues) spans 366–375; sequence SPRSSVSTLE. The short motif at 402-409 is the Nuclear localization signal 1 element; that stretch reads SKKPTKVK. Disordered regions lie at residues 486 to 619, 681 to 738, 871 to 931, and 944 to 973; these read AIPG…GEAG, LSVS…KTNQ, KAEP…NGNR, and ENSSKANTEPPQVTMTLNRNSGPSSSSSSV. The segment covering 498–526 has biased composition (basic and acidic residues); the sequence is SLDEEKGLAEKSKERMEERAAVLPEHGKS. Over residues 545 to 568 the composition is skewed to polar residues; it reads AGSSLQPLLESHTSASEGKSSTGS. Short sequence motifs (nuclear localization signal) lie at residues 596-603, 705-712, and 733-740; these read KKKKKEPD, VKRTEDPS, and LKKTNQLK. The segment covering 706–729 has biased composition (basic and acidic residues); it reads KRTEDPSKAGKKRLSSDRQDEIPS. Basic and acidic residues predominate over residues 871–880; the sequence is KAEPREPENT. Over residues 897-906 the composition is skewed to pro residues; the sequence is LHQPTLPPPN. The span at 921 to 930 shows a compositional bias: low complexity; that stretch reads SSSSNNGNGN. The segment covering 947–966 has biased composition (polar residues); that stretch reads SKANTEPPQVTMTLNRNSGP.

It belongs to the PDP family. Interacts with MSI4/FVE. Component of the PRC2 (polycomb repressive complex 2) complex which regulates histone methylation on histone H3K27.

The protein localises to the nucleus. In terms of biological role, together with PDP2, PDP3 and PDP6, interacts with MSI4/FVE and MSI5 to suppress FLC, MAF4 and MAF5 expression by regulating the function of the PRC2 complex and modulating H3K27me3 level, thereby promoting flowering. In Arabidopsis thaliana (Mouse-ear cress), this protein is PWWP domain-containing protein 1.